The chain runs to 256 residues: Omega-amidase YafV (256 aa).

Residues 4-234 form the CN hydrolase domain; it reads LKLTLLQQPL…AAQLDAELSL (231 aa). Catalysis depends on Glu42, which acts as the Proton acceptor. Lys107 is a catalytic residue. Cys141 functions as the Nucleophile in the catalytic mechanism.

The protein belongs to the carbon-nitrogen hydrolase superfamily. NIT1/NIT2 family.

The catalysed reaction is a monoamide of a dicarboxylate + H2O = a dicarboxylate + NH4(+). Its function is as follows. Hydrolyzes alpha-ketoglutaramate (a-KGM) to alpha-ketoglutarate (alpha-KG) and ammonia (specific activity 21 umol/min/mg), has very weak activity on L-glutamine, and no activity on deaminated glutathione (dGSH) or glutathione. May function as a metabolite repair enzyme. This chain is Omega-amidase YafV, found in Yersinia enterocolitica.